Here is a 717-residue protein sequence, read N- to C-terminus: SUN domain-containing protein 2 (717 aa).

The interval 1–66 (MSRRSQRLTR…PQLGPSSDAH (66 aa)) is disordered. The tract at residues 1–139 (MSRRSQRLTR…SSSGYSSEDD (139 aa)) is LMNA-binding. At 1 to 212 (MSRRSQRLTR…LTRRFSSLKT (212 aa)) the chain is on the nuclear side. Position 12 is a phosphoserine (S12). The span at 19–32 (SSSSGGSSVAGSQS) shows a compositional bias: low complexity. S38 and S54 each carry phosphoserine. T107 carries the phosphothreonine modification. 4 positions are modified to phosphoserine: S110, S113, S116, and S136. Residues 213–233 (FLWFLLPLLLLTCLTYGAWYF) traverse the membrane as a helical segment. Over 234–717 (YPYGLQTFHP…RFRVHGEPAH (484 aa)) the chain is Perinuclear space. Coiled coils occupy residues 273-296 (EQRV…EFSS), 348-440 (RRET…EEVG), and 475-506 (LLQR…SARE). The tract at residues 507 to 717 (AAASLSLTLQ…RFRVHGEPAH (211 aa)) is sufficient for interaction with SYNE1 and SYNE2. The SUN domain maps to 555–716 (GASVISTRCS…YRFRVHGEPA (162 aa)). C601 and C705 form a disulfide bridge. N636 carries an N-linked (GlcNAc...) asparagine glycan.

In terms of assembly, core component of the LINC complex which is composed of inner nuclear membrane SUN domain-containing proteins coupled to outer nuclear membrane KASH domain-containing nesprins. SUN and KASH domain-containing proteins seem to bind each other promiscuously; however, differentially expression of LINC complex constituents is giving rise to specific assemblies. At least SUN1/2-containing core LINC complexes are proposed to be hexameric composed of three protomers of each KASH and SUN domain-containing protein. Interacts with SYNE2; the SUN2:SYNE2/KASH2 LINC complex is a heterohexamer; the homotrimeric cloverleave-like conformation of the SUN domain is a prerequisite for LINC complex formation in which three separate SYNE2/KASH2 peptides bind at the interface of adjacent SUN domains. Component of a probable SUN2:KASH5 LINC complex. Interacts with SYNE1 and SYNE3; probably forming respective LINC complexes. Interacts with A-type lamin. Interaction with lamins B1 and C is hardly detectable. Interacts with EMD and RAB5A. Interacts with TMEM43. Interacts with TMEM201. The disulfide bond with SYNE2 is required for stability of the SUN2:SYNE2/KASH2 LINC complex under tensile forces though not required for the interaction. The disulfide bond is proposed to be conserved in LINC complexes involved in force transmission. Widely expressed. Highly expressed in heart, lung and muscle. Weakly expressed in fetal heart. Slightly overexpressed in some heart tissues form patients with congenital heart defects.

The protein localises to the nucleus inner membrane. It localises to the nucleus envelope. Its subcellular location is the endosome membrane. Functionally, as a component of the LINC (LInker of Nucleoskeleton and Cytoskeleton) complex, involved in the connection between the nuclear lamina and the cytoskeleton. The nucleocytoplasmic interactions established by the LINC complex play an important role in the transmission of mechanical forces across the nuclear envelope and in nuclear movement and positioning. Specifically, SYNE2 and SUN2 assemble in arrays of transmembrane actin-associated nuclear (TAN) lines which are bound to F-actin cables and couple the nucleus to retrograde actin flow during actin-dependent nuclear movement. Required for interkinetic nuclear migration (INM) and essential for nucleokinesis and centrosome-nucleus coupling during radial neuronal migration in the cerebral cortex and during glial migration. Required for nuclear migration in retinal photoreceptor progenitors implicating association with cytoplasmic dynein-dynactin and kinesin motor complexes, and probably B-type lamins; SUN1 and SUN2 seem to act redundantly. The SUN1/2:KASH5 LINC complex couples telomeres to microtubules during meiosis; SUN1 and SUN2 seem to act at least partial redundantly. Anchors chromosome movement in the prophase of meiosis and is involved in selective gene expression of coding and non-coding RNAs needed for gametogenesis. Required for telomere attachment to nuclear envelope and gametogenesis. May also function on endocytic vesicles as a receptor for RAB5-GDP and participate in the activation of RAB5. This chain is SUN domain-containing protein 2, found in Homo sapiens (Human).